A 338-amino-acid chain; its full sequence is Ketol-acid reductoisomerase (NADP(+)) (338 aa).

The region spanning 1-181 (MKVYYDKDCD…GGGRTGIIET (181 aa)) is the KARI N-terminal Rossmann domain. NADP(+) contacts are provided by residues 24 to 27 (YGSQ), R47, S50, S52, and 82 to 85 (DEFQ). Residue H107 is part of the active site. G133 provides a ligand contact to NADP(+). The region spanning 182-327 (TFKDETETDL…EKLRTMMPWI (146 aa)) is the KARI C-terminal knotted domain. Residues D190, E194, E226, and E230 each contribute to the Mg(2+) site. S251 lines the substrate pocket.

Belongs to the ketol-acid reductoisomerase family. Requires Mg(2+) as cofactor.

The catalysed reaction is (2R)-2,3-dihydroxy-3-methylbutanoate + NADP(+) = (2S)-2-acetolactate + NADPH + H(+). It carries out the reaction (2R,3R)-2,3-dihydroxy-3-methylpentanoate + NADP(+) = (S)-2-ethyl-2-hydroxy-3-oxobutanoate + NADPH + H(+). The protein operates within amino-acid biosynthesis; L-isoleucine biosynthesis; L-isoleucine from 2-oxobutanoate: step 2/4. It participates in amino-acid biosynthesis; L-valine biosynthesis; L-valine from pyruvate: step 2/4. Its function is as follows. Involved in the biosynthesis of branched-chain amino acids (BCAA). Catalyzes an alkyl-migration followed by a ketol-acid reduction of (S)-2-acetolactate (S2AL) to yield (R)-2,3-dihydroxy-isovalerate. In the isomerase reaction, S2AL is rearranged via a Mg-dependent methyl migration to produce 3-hydroxy-3-methyl-2-ketobutyrate (HMKB). In the reductase reaction, this 2-ketoacid undergoes a metal-dependent reduction by NADPH to yield (R)-2,3-dihydroxy-isovalerate. This is Ketol-acid reductoisomerase (NADP(+)) from Azotobacter vinelandii (strain DJ / ATCC BAA-1303).